Reading from the N-terminus, the 36-residue chain is Pancreatic polypeptide (36 aa).

Y36 bears the Tyrosine amide mark.

Belongs to the NPY family.

It is found in the secreted. Its function is as follows. Hormone secreted by pancreatic cells that acts as a regulator of pancreatic and gastrointestinal functions probably by signaling through the G protein-coupled receptor NPY4R2. This is Pancreatic polypeptide (PPY) from Erinaceus europaeus (Western European hedgehog).